Here is a 901-residue protein sequence, read N- to C-terminus: Core protein VP3 (901 aa).

This sequence belongs to the orbivirus VP3 family.

Its subcellular location is the virion. Its function is as follows. The VP3 protein is one of the five proteins (with VP1, VP4, VP6 and VP7) which form the inner capsid of the virus. The polypeptide is Core protein VP3 (Segment-3) (Antilocapra americana (Pronghorn)).